The chain runs to 541 residues: Malate synthase (541 aa).

Arg172 (proton acceptor) is an active-site residue. Asp452 serves as the catalytic Proton donor.

Belongs to the malate synthase family.

It is found in the cytoplasm. It catalyses the reaction glyoxylate + acetyl-CoA + H2O = (S)-malate + CoA + H(+). It participates in carbohydrate metabolism; glyoxylate cycle; (S)-malate from isocitrate: step 2/2. This chain is Malate synthase (mls), found in Myxococcus xanthus (strain DK1622).